The chain runs to 444 residues: tRNA modification GTPase MnmE (444 aa).

(6S)-5-formyl-5,6,7,8-tetrahydrofolate contacts are provided by R23, E82, and K121. A TrmE-type G domain is found at 216–365; that stretch reads GTSIVLAGLP…LKQALQKWLN (150 aa). N226 contributes to the K(+) binding site. GTP contacts are provided by residues 226-231, 245-251, and 270-273; these read NAGKSS, TDIPGTT, and DSAG. S230 provides a ligand contact to Mg(2+). Residues T245, I247, and T250 each contribute to the K(+) site. T251 serves as a coordination point for Mg(2+). A (6S)-5-formyl-5,6,7,8-tetrahydrofolate-binding site is contributed by K444.

The protein belongs to the TRAFAC class TrmE-Era-EngA-EngB-Septin-like GTPase superfamily. TrmE GTPase family. In terms of assembly, homodimer. Heterotetramer of two MnmE and two MnmG subunits. Requires K(+) as cofactor.

It is found in the cytoplasm. Functionally, exhibits a very high intrinsic GTPase hydrolysis rate. Involved in the addition of a carboxymethylaminomethyl (cmnm) group at the wobble position (U34) of certain tRNAs, forming tRNA-cmnm(5)s(2)U34. This is tRNA modification GTPase MnmE from Chlamydia trachomatis serovar A (strain ATCC VR-571B / DSM 19440 / HAR-13).